A 362-amino-acid chain; its full sequence is Outer membrane porin F (362 aa).

Positions 1-22 (MMKRNILAVIVPALLVAGTANA) are cleaved as a signal peptide. Residues 23 to 28 (AEIYNK) traverse the membrane as a beta stranded segment. Aspartate 29 is a topological domain (periplasmic). Residues 30–45 (GNKVDLYGKAVGLHYF) form a beta stranded membrane-spanning segment. The Extracellular segment spans residues 46-60 (SKGNGENSYGGNGDM). Residues 61-73 (TYARLGFKGETQI) form a beta stranded membrane-spanning segment. The Periplasmic segment spans residues 74–75 (NS). Residues 76-88 (DLTGYGQWEYNFQ) traverse the membrane as a beta stranded segment. Over 89–104 (GNNSEGADAQTGNKTR) the chain is Extracellular. Residues 105–113 (LAFAGLKYA) form a beta stranded membrane-spanning segment. At 114 to 115 (DV) the chain is on the periplasmic side. A beta stranded membrane pass occupies residues 116-122 (GSFDYGR). Topologically, residues 123–156 (NYGVVYDALGYTDMLPEFGGDTAYSDDFFVGRVG) are extracellular. Residues 157-163 (GVATYRN) form a beta stranded membrane-spanning segment. At 164–171 (SNFFGLVD) the chain is on the periplasmic side. A beta stranded transmembrane segment spans residues 172–181 (GLNFAVQYLG). Residues 182 to 193 (KNERDTARRSNG) are Extracellular-facing. A beta stranded transmembrane segment spans residues 194 to 204 (DGVGGSISYEY). Residue glutamate 205 is a topological domain, periplasmic. A beta stranded transmembrane segment spans residues 206–217 (GFGIVGAYGAAD). Residues 218 to 232 (RTNLQEAQPLGNGKK) lie on the Extracellular side of the membrane. A beta stranded transmembrane segment spans residues 233–244 (AEQWATGLKYDA). Asparagine 245 is a topological domain (periplasmic). Residues 246 to 257 (NIYLAANYGETR) traverse the membrane as a beta stranded segment. At 258–274 (NATPITNKFTNTSGFAN) the chain is on the extracellular side. A beta stranded transmembrane segment spans residues 275 to 287 (KTQDVLLVAQYQF). Residues 288-289 (DF) lie on the Periplasmic side of the membrane. A beta stranded membrane pass occupies residues 290–303 (GLRPSIAYTKSKAK). The Extracellular segment spans residues 304–313 (DVEGIGDVDL). A beta stranded transmembrane segment spans residues 314-325 (VNYFEVGATYYF). Residues 326-327 (NK) lie on the Periplasmic side of the membrane. The beta stranded transmembrane segment at 328–337 (NMSTYVDYII) threads the bilayer. Topologically, residues 338-352 (NQIDSDNKLGVGSDD) are extracellular. Residues 353 to 362 (TVAVGIVYQF) form a beta stranded membrane-spanning segment.

It belongs to the Gram-negative porin family. Homotrimer. Forms mixed heterotrimers with OmpC and with PhoE; other mixed heterotrimers are also probable. As to quaternary structure, (Microbial infection) Trimeric complexes with colicin E3, BtuB and OmpF can be cross-linked and immunoprecipitated.

The protein localises to the cell outer membrane. Forms pores that allow passive diffusion of small molecules across the outer membrane. In terms of biological role, (Microbial infection) It is also a receptor for the bacteriophage T2. Is the major receptor for colicin E5. Its function is as follows. (Microbial infection) Probably translocates colicin E3 (and other A-type colicins) across the outer membrane. Functionally, (Microbial infection) A mixed OmpC-OmpF heterotrimer is the outer membrane receptor for toxin CdiA-EC536 (ECL_04451); polymorphisms in extracellular loops 4 and 5 of OmpC confer susceptibility to CdiA-EC536-mediated toxicity. In Escherichia coli (strain K12), this protein is Outer membrane porin F (ompF).